Consider the following 69-residue polypeptide: Sec-independent protein translocase protein TatA (69 aa).

The chain crosses the membrane as a helical span at residues 1–21; sequence MFPKLGMGELVVILLIVVILF. Positions 43-69 are disordered; the sequence is SFSGEDEEKPSTPGATSSDEASKAKQA.

It belongs to the TatA/E family. As to quaternary structure, the Tat system comprises two distinct complexes: a TatABC complex, containing multiple copies of TatA, TatB and TatC subunits, and a separate TatA complex, containing only TatA subunits. Substrates initially bind to the TatABC complex, which probably triggers association of the separate TatA complex to form the active translocon.

Its subcellular location is the cell inner membrane. Its function is as follows. Part of the twin-arginine translocation (Tat) system that transports large folded proteins containing a characteristic twin-arginine motif in their signal peptide across membranes. TatA could form the protein-conducting channel of the Tat system. The chain is Sec-independent protein translocase protein TatA from Anaeromyxobacter sp. (strain Fw109-5).